The primary structure comprises 525 residues: Protein shisa-6 (525 aa).

An N-terminal signal peptide occupies residues 1–30; that stretch reads MALRRLLLPPLLLSLLLSLASLHLPPGADA. Residues 31-180 lie on the Extracellular side of the membrane; sequence ARGRSGNRTL…NKYDPEKDKT (150 aa). Asn37 and Asn62 each carry an N-linked (GlcNAc...) asparagine glycan. A helical transmembrane segment spans residues 181-201; the sequence is NFTVYITCGVIAFVIVAGVFA. Over 202–525 the chain is Cytoplasmic; that stretch reads KVSYDKAHRP…YTASKTEVTV (324 aa). Residues 241–294 form a disordered region; that stretch reads ISAIDTSPKENTPVRSTSKNHYTPVRTAKQTPGDRQYNHPILSSATQTPTHEKP. The segment covering 243–261 has biased composition (polar residues); sequence AIDTSPKENTPVRSTSKNH. Phosphoserine occurs at positions 416, 422, and 434. Thr458 bears the Phosphothreonine mark. The disordered stretch occupies residues 469–495; it reads MHSHPSASNNSYATLGQSQTAAKRHAF. A compositionally biased stretch (polar residues) spans 473–489; sequence PSASNNSYATLGQSQTA. Thr502 carries the phosphothreonine modification. The PDZ-binding signature appears at 522-525; that stretch reads EVTV.

It belongs to the shisa family. As to quaternary structure, component of the postsynaptic hippocampal AMPA-type glutamate receptor (AMPAR) complex, at least composed of pore forming AMPAR subunits GRIA1, GRIA2 and GRIA3 and AMPAR auxiliary proteins SHISA6 and SHISA7. Interacts (via PDZ-binding motif) with DLG4/PSD-95 (via PDZ domain); the interaction is direct. Post-translationally, N-glycosylated. In terms of tissue distribution, highly expressed in cerebellum and hippocampal neurons: CA1 stratum oriens and stratum radiatum, CA3 stratum oriens and stratum lucidum, and the dentate gyrus polymorphic layer. Expressed in other brain structures including olfactory bulb, cortex, amygdala and midbrain (at protein level). Also expressed in a subset of spermatogonial stem cells. Also expressed in eye, heart, kidney, lung, muscle and spleen. Isoform 2: Specifically expressed in hippocampus.

The protein localises to the postsynaptic density membrane. In terms of biological role, involved in maintenance of high-frequency synaptic transmission at hippocampal CA3-CA1 synapses. Regulates AMPA-type glutamate receptor (AMPAR) immobilization at postsynaptic density keeping the channels in an activated state in the presence of glutamate and preventing synaptic depression. May play a role in self-renewal and differentiation of spermatogonial stem cells by inhibiting canonical Wnt signaling pathway. The polypeptide is Protein shisa-6 (Mus musculus (Mouse)).